We begin with the raw amino-acid sequence, 934 residues long: Protein translocase subunit SecA (934 aa).

ATP contacts are provided by residues Q87, 105–109 (GEGKT), and D515. Zn(2+)-binding residues include C918, C920, C929, and H930.

Belongs to the SecA family. As to quaternary structure, monomer and homodimer. Part of the essential Sec protein translocation apparatus which comprises SecA, SecYEG and auxiliary proteins SecDF-YajC and YidC. The cofactor is Zn(2+).

The protein resides in the cell inner membrane. The protein localises to the cytoplasm. It catalyses the reaction ATP + H2O + cellular proteinSide 1 = ADP + phosphate + cellular proteinSide 2.. Its function is as follows. Part of the Sec protein translocase complex. Interacts with the SecYEG preprotein conducting channel. Has a central role in coupling the hydrolysis of ATP to the transfer of proteins into and across the cell membrane, serving both as a receptor for the preprotein-SecB complex and as an ATP-driven molecular motor driving the stepwise translocation of polypeptide chains across the membrane. The chain is Protein translocase subunit SecA from Ralstonia nicotianae (strain ATCC BAA-1114 / GMI1000) (Ralstonia solanacearum).